The primary structure comprises 154 residues: Large ribosomal subunit protein uL15 (154 aa).

The interval 17–44 (KRVGRGIGSGTGKTGGRGVKGQRSRSGV) is disordered. Residues 21–35 (RGIGSGTGKTGGRGV) are compositionally biased toward gly residues.

The protein belongs to the universal ribosomal protein uL15 family. As to quaternary structure, part of the 50S ribosomal subunit.

Its function is as follows. Binds to the 23S rRNA. The chain is Large ribosomal subunit protein uL15 from Bartonella henselae (strain ATCC 49882 / DSM 28221 / CCUG 30454 / Houston 1) (Rochalimaea henselae).